An 859-amino-acid chain; its full sequence is MSRKSSTEYVHNQEDADIEVFESEYRTYRESEAAENRDGLHNGDEENWKVNSSKQKFGVTKNELSDVLYDSIPAYEESTVTLKEYYDHSIKNNLTAKSAGSYLVSLFPIIKWFPHYNFTWGYADLVAGITVGCVLVPQSMSYAQIASLSPEYGLYSSFIGAFIYSLFATSKDVCIGPVAVMSLQTAKVIAEVLKKYPEDQTEVTAPIIATTLCLLCGIVATGLGILRLGFLVELISLNAVAGFMTGSAFNIIWGQIPALMGYNSLVNTREATYKVVINTLKHLPNTKLDAVFGLIPLVILYVWKWWCGTFGITLADRYYRNQPKVANRLKSFYFYAQAMRNAVVIVVFTAISWSITRNKSSKDRPISILGTVPSGLNEVGVMKIPDGLLSNMSSEIPASIIVLVLEHIAISKSFGRINDYKVVPDQELIAIGVTNLIGTFFHSYPATGSFSRSALKAKCNVRTPFSGVFTGGCVLLALYCLTDAFFFIPKATLSAVIIHAVSDLLTSYKTTWTFWKTNPLDCISFIVTVFITVFSSIENGIYFAMCWSCAMLLLKQAFPAGKFLGRVEVAEVLNPTVQEDIDAVISSNELPNELNKQVKSTVEVLPAPEYKFSVKWVPFDHGYSRELNINTTVRPPPPGVIVYRLGDSFTYVNCSRHYDIIFDRIKEETRRGQLITLRKKSDRPWNDPGEWKMPDSLKSLFKFKRHSATTNSDLPISNGSSNGETYEKPLLKVVCLDFSQVAQVDSTAVQSLVDLRKAVNRYADRQVEFHFAGIISPWIKRSLLSVKFGTTNEEYSDDSIIAGHSSFHVAKVLKDDVDYTDEDSRISTSYSNYETLCAATGTNLPFFHIDIPDFSKWDV.

N51 and N93 each carry an N-linked (GlcNAc...) asparagine glycan. 8 helical membrane passes run L94–P114, Y116–V136, L148–A168, V173–L193, P206–L226, L234–G254, F292–I312, and F332–S352. N-linked (GlcNAc...) asparagine glycans are attached at residues N358 and N391. The next 4 membrane-spanning stretches (helical) occupy residues E395–G415, L428–G448, V468–I488, and F525–M545. N-linked (GlcNAc...) asparagine glycosylation is found at N630, N653, and N718. Residues N630 to H808 enclose the STAS domain.

Belongs to the SLC26A/SulP transporter (TC 2.A.53) family.

The protein localises to the membrane. Its function is as follows. High affinity uptake of sulfate into the cell. This is Sulfate permease 1 (SUL1) from Saccharomyces cerevisiae (strain ATCC 204508 / S288c) (Baker's yeast).